The chain runs to 562 residues: Arginine--tRNA ligase (562 aa).

Residues 121–131 (PNIAKPMGMGH) carry the 'HIGH' region motif.

Belongs to the class-I aminoacyl-tRNA synthetase family. As to quaternary structure, monomer.

Its subcellular location is the cytoplasm. The catalysed reaction is tRNA(Arg) + L-arginine + ATP = L-arginyl-tRNA(Arg) + AMP + diphosphate. This chain is Arginine--tRNA ligase, found in Limosilactobacillus reuteri (strain DSM 20016) (Lactobacillus reuteri).